The sequence spans 483 residues: MORN repeat-containing protein 1 (483 aa).

Serine 18 is modified (phosphoserine). 7 MORN repeats span residues 39–61 (YEGE…DGSY), 62–84 (YEGE…WSGN), 86–108 (YSGQ…AGGH), 109–131 (YEGE…DGQV), 132–154 (YQGS…NGDK), 155–177 (YEGD…DGST), and 178–200 (YKGQ…SGVT). The segment at 392 to 427 (EKAGNRPKGDRSPPEVLSTAQEPLRGTNRSDGTTAE) is disordered. Positions 394–404 (AGNRPKGDRSP) are enriched in basic and acidic residues. The residue at position 403 (serine 403) is a Phosphoserine. The span at 418-427 (TNRSDGTTAE) shows a compositional bias: polar residues.

In Rattus norvegicus (Rat), this protein is MORN repeat-containing protein 1 (Morn1).